Here is a 289-residue protein sequence, read N- to C-terminus: ATP synthase gamma chain (289 aa).

Belongs to the ATPase gamma chain family. As to quaternary structure, F-type ATPases have 2 components, CF(1) - the catalytic core - and CF(0) - the membrane proton channel. CF(1) has five subunits: alpha(3), beta(3), gamma(1), delta(1), epsilon(1). CF(0) has three main subunits: a, b and c.

The protein localises to the cell inner membrane. In terms of biological role, produces ATP from ADP in the presence of a proton gradient across the membrane. The gamma chain is believed to be important in regulating ATPase activity and the flow of protons through the CF(0) complex. In Histophilus somni (strain 2336) (Haemophilus somnus), this protein is ATP synthase gamma chain.